A 516-amino-acid polypeptide reads, in one-letter code: L-amino-acid oxidase (516 aa).

The first 18 residues, 1-18 (MNVFFMFSLLFLAALGSC), serve as a signal peptide directing secretion. Cysteines 28 and 189 form a disulfide. Residues 61 to 62 (MA), 81 to 82 (EA), Arg-89, and 103 to 106 (GPMR) each bind FAD. The substrate site is built by Arg-106 and His-239. Val-279 is an FAD binding site. Cys-349 and Cys-430 are joined by a disulfide. Asn-379 is a glycosylation site (N-linked (GlcNAc...) asparagine). Tyr-390 lines the substrate pocket. FAD is bound by residues Glu-475 and 482-487 (GWIDST). 482-483 (GW) is a binding site for substrate.

This sequence belongs to the flavin monoamine oxidase family. FIG1 subfamily. Homodimer; non-covalently linked. FAD serves as cofactor. N-glycosylated. Expressed by the venom gland.

The protein localises to the secreted. It catalyses the reaction an L-alpha-amino acid + O2 + H2O = a 2-oxocarboxylate + H2O2 + NH4(+). The enzyme catalyses L-leucine + O2 + H2O = 4-methyl-2-oxopentanoate + H2O2 + NH4(+). It carries out the reaction L-phenylalanine + O2 + H2O = 3-phenylpyruvate + H2O2 + NH4(+). The catalysed reaction is L-methionine + O2 + H2O = 4-methylsulfanyl-2-oxobutanoate + H2O2 + NH4(+). It catalyses the reaction L-arginine + O2 + H2O = 5-guanidino-2-oxopentanoate + H2O2 + NH4(+). Catalyzes an oxidative deamination of predominantly hydrophobic and aromatic L-amino acids, thus producing hydrogen peroxide that may contribute to the diverse toxic effects of this enzyme. Is active on L-Arg, L-Phe, L-Met, and L-Leu and is weakly active on L-Val. Exhibits diverse biological activities, such as hemorrhage, hemolysis, edema, apoptosis of vascular endothelial cells or tumor cell lines, antibacterial and antiparasitic activities, as well as regulation of platelet aggregation. Its effect on platelets is controversial, since it either induces aggregation or inhibits agonist-induced aggregation. These different effects are probably due to different experimental conditions. This chain is L-amino-acid oxidase, found in Crotalus adamanteus (Eastern diamondback rattlesnake).